A 161-amino-acid polypeptide reads, in one-letter code: UPF0178 protein BruAb1_1955 (161 aa).

This sequence belongs to the UPF0178 family.

This chain is UPF0178 protein BruAb1_1955, found in Brucella abortus biovar 1 (strain 9-941).